The chain runs to 256 residues: Chlorophyll a-b binding protein CP24 10A, chloroplastic (256 aa).

Helical transmembrane passes span Trp-106–Phe-126 and Ala-134–Val-154.

Belongs to the ELIP/psbS family.

Its subcellular location is the plastid. It localises to the chloroplast thylakoid membrane. The chain is Chlorophyll a-b binding protein CP24 10A, chloroplastic (CAP10A) from Solanum lycopersicum (Tomato).